We begin with the raw amino-acid sequence, 522 residues long: Sugar transport protein MST2 (522 aa).

Residues 1-24 (MAAATAADVAEDTASVYSGKLTLY) are Cytoplasmic-facing. Residues 25–45 (VFLTCGVAATGGLIIGYDIGI) traverse the membrane as a helical segment. Residues 46 to 82 (SGGVTSMDTFLGKFFPSVLHQEQTAQGTSQYCKFNSQ) lie on the Extracellular side of the membrane. Residues 83 to 103 (PLTAFTSSLYLAALVASFFVA) form a helical membrane-spanning segment. At 104 to 111 (SFTRALGR) the chain is on the cytoplasmic side. The helical transmembrane segment at 112 to 132 (KWSMFGGGVSFLAGATLNGAA) threads the bilayer. Residues 133-134 (RN) lie on the Extracellular side of the membrane. A helical membrane pass occupies residues 135–155 (VAMLIVGRILLGIGVAFCGLS). Residues 156–169 (TPIYLSEMAPPRLR) are Cytoplasmic-facing. Residues 170-190 (GMLNIGLQLMITVGIFSANLV) form a helical membrane-spanning segment. Over 191–204 (NYGAAKIRGGWGWR) the chain is Extracellular. Residues 205-225 (VSLGLAAAPACVIAVGSLFLP) traverse the membrane as a helical segment. Topologically, residues 226–291 (DSPSSLINRG…DVLQRRYRPQ (66 aa)) are cytoplasmic. A helical transmembrane segment spans residues 292–312 (LAMAVLIPFFQQLTGINVIMF). Residues 313-329 (YAPVLFKTIGLGGDASL) are Extracellular-facing. Residues 330–350 (MSAVITGLVNIVATFVSIATV) form a helical membrane-spanning segment. The Cytoplasmic segment spans residues 351–361 (DSLGRRKLLFQ). Residues 362-382 (GGCQMLVSQVIIGTLIGVVFG) traverse the membrane as a helical segment. Residues 383–391 (TSGDGNISR) are Extracellular-facing. The helical transmembrane segment at 392–412 (ALAVCIVVFICVYVAGFAWSW) threads the bilayer. The Cytoplasmic portion of the chain corresponds to 413-434 (GPLGVLLPSEIFPLEVRPAGQS). The helical transmembrane segment at 435–455 (ISVAVNMLCTFAVAEAFLPML) threads the bilayer. Topologically, residues 456–459 (CHMR) are extracellular. A helical transmembrane segment spans residues 460 to 480 (FGLFYFFSGWVLVMTLFVSAF). Residues 481–522 (LPETKGVPIEKMTVVWRTHWFWGRFYCNQDADAHVQVANSKV) are Cytoplasmic-facing.

This sequence belongs to the major facilitator superfamily. Sugar transporter (TC 2.A.1.1) family.

The protein resides in the membrane. Functionally, mediates active uptake of hexoses by sugar:proton symport. Can transport glucose. This chain is Sugar transport protein MST2, found in Oryza sativa subsp. japonica (Rice).